We begin with the raw amino-acid sequence, 511 residues long: Cobyric acid synthase (511 aa).

The 193-residue stretch at 251-443 (LLDIAIICLP…IHGIFDNDVF (193 aa)) folds into the GATase cobBQ-type domain. The active-site Nucleophile is the C332. H435 is an active-site residue.

This sequence belongs to the CobB/CobQ family. CobQ subfamily.

It participates in cofactor biosynthesis; adenosylcobalamin biosynthesis. Catalyzes amidations at positions B, D, E, and G on adenosylcobyrinic A,C-diamide. NH(2) groups are provided by glutamine, and one molecule of ATP is hydrogenolyzed for each amidation. The sequence is that of Cobyric acid synthase from Listeria monocytogenes serotype 4b (strain CLIP80459).